A 376-amino-acid polypeptide reads, in one-letter code: MTKCNIFNMIFLKFSNAFIKKIKYLSIISIISVFLLNSSIVYSCSKIILIFDNNFKENNKNILNKLVLPIKNIILKGTSNLEFNDYLLKLSNFYGSPIHKCIYNFPYKKLQNNNLNNLKYIIFKSKIDNNFIKNMQYLNVSNDNIDNVVRCIKLELKIHQLKQDHKCNILIQNNSFLKHNIVQKNIILSFEIPYNTKNIYGFFTKKNKFFDVHGISSAPIFLKFPFLKKYRISSKFNPNRFNPITKKNSPHQGIDFAMPIGTPILSIGDGVILNAKFSIQAGNYITIQHNCSYITKYMHLKKILVKIGDKVKMRDKIGLSGNTGYSTGPHLHYEVWLHKKVINPKNLKTRECLIKKNLKEHINFSNIIITQFEIFK.

A helical transmembrane segment spans residues 24–44 (YLSIISIISVFLLNSSIVYSC). H251 is a Zn(2+) binding site.

Belongs to the peptidase M23B family. Requires Zn(2+) as cofactor.

Its subcellular location is the cell membrane. This is an uncharacterized protein from Buchnera aphidicola subsp. Baizongia pistaciae (strain Bp).